A 371-amino-acid polypeptide reads, in one-letter code: MPHQQMLILFGLLPVATNISTWWNFGSMLLACSSMQVLTGFFLAVHYTANINLAFSSIVHITRDVPYGWMMQNLHAIGASMFFICIYIHIARGLYYGSYLNKKTWLSGTTLLIMLMATAFFGYVLPWGQMSFWAATVITNLLTAIPYLGTTMTTWLWGGFAINDPTLTRFFALHFILPFGIISLSSLHIMLLHEDGSSNPLGTNSDIDKIPFHPYHTYKDLLMLSLMVLMLLMTVSFLPDIFNDPENFSKANPLVTPQHIKPEWYFLFAYGILRSIPNKLWGALALAMSITILLTVPFTHTSTIRSMMFRPIMQLMFWTLVATFMVITWAATKPVEPPFTMISQIASTIYFLFLIMNPIAGWIENNILKYN.

The next 4 helical transmembrane spans lie at Phe-25–Val-45, Trp-69–Ile-90, Trp-105–Leu-125, and Phe-170–Met-190. Residues His-75 and His-89 each coordinate heme b. Heme b is bound by residues His-174 and His-188. A ubiquinone is bound at residue His-193. 4 helical membrane passes run Tyr-218 to Leu-238, Leu-280 to His-300, Ile-312 to Thr-332, and Phe-339 to Pro-358.

This sequence belongs to the cytochrome b family. As to quaternary structure, the cytochrome bc1 complex contains 3 respiratory subunits (MT-CYB, CYC1 and UQCRFS1), 2 core proteins (UQCRC1 and UQCRC2) and probably 6 low-molecular weight proteins. Heme b serves as cofactor.

The protein resides in the mitochondrion inner membrane. Its function is as follows. Component of the ubiquinol-cytochrome c reductase complex (complex III or cytochrome b-c1 complex) that is part of the mitochondrial respiratory chain. The b-c1 complex mediates electron transfer from ubiquinol to cytochrome c. Contributes to the generation of a proton gradient across the mitochondrial membrane that is then used for ATP synthesis. The chain is Cytochrome b (MT-CYB) from Eryx miliaris nogaiorum (Black sand boa).